Consider the following 107-residue polypeptide: Large ribosomal subunit protein bL21c (107 aa).

It belongs to the bacterial ribosomal protein bL21 family. As to quaternary structure, part of the 50S ribosomal subunit.

It is found in the plastid. Its subcellular location is the chloroplast. Its function is as follows. This protein binds to 23S rRNA. The polypeptide is Large ribosomal subunit protein bL21c (Cyanidioschyzon merolae (strain NIES-3377 / 10D) (Unicellular red alga)).